Consider the following 391-residue polypeptide: Arrestin-C (391 aa).

Positions 369-379 are enriched in basic and acidic residues; that stretch reads ARQEPGGREES. The tract at residues 369-391 is disordered; sequence ARQEPGGREESQEALAAEGDEGS.

The protein belongs to the arrestin family. Homodimer; disulfide-linked in response to retinal illumination. Interacts with CXCR4; the interaction is dependent on the C-terminal phosphorylation of CXCR4 and modulates the calcium ion mobilization activity of CXCR4. Interacts with GPR84.

The protein localises to the photoreceptor inner segment. It localises to the cell projection. Its subcellular location is the cilium. The protein resides in the photoreceptor outer segment. Functionally, may play a role in an as yet undefined retina-specific signal transduction. Could bind to photoactivated-phosphorylated red/green opsins. The polypeptide is Arrestin-C (ARR3) (Sus scrofa (Pig)).